A 104-amino-acid chain; its full sequence is Large ribosomal subunit protein bL21 (104 aa).

It belongs to the bacterial ribosomal protein bL21 family. In terms of assembly, part of the 50S ribosomal subunit. Contacts protein L20.

Functionally, this protein binds to 23S rRNA in the presence of protein L20. The sequence is that of Large ribosomal subunit protein bL21 from Streptococcus thermophilus (strain ATCC BAA-491 / LMD-9).